The sequence spans 639 residues: 3-hydroxybenzoate 4-monooxygenase (639 aa).

FAD contacts are provided by residues 34–64 (DVLI…IVEQ), Gln73, Val166, Asn212, 269–271 (RFY), Tyr317, Asp349, and Ser365.

It belongs to the PheA/TfdB FAD monooxygenase family. Homodimer. FAD serves as cofactor.

It catalyses the reaction 3-hydroxybenzoate + NADPH + O2 + H(+) = 3,4-dihydroxybenzoate + NADP(+) + H2O. Its function is as follows. Converts 3-hydroxybenzoate (m-hydroxybenzoate), and to a lesser extent p-hydroxybenzoate, to 3,4-dihydroxybenzoate (protocatechuate). Also acts on a number of analogs of 3-hydroxybenzoate substituted in the 2, 4, 5 and 6 positions. In Comamonas testosteroni (Pseudomonas testosteroni), this protein is 3-hydroxybenzoate 4-monooxygenase (mobA).